The following is a 159-amino-acid chain: UPF0756 membrane protein PTH_1668 (159 aa).

4 consecutive transmembrane segments (helical) span residues 15 to 37, 61 to 81, 117 to 137, and 138 to 158; these read ILIT…SSCI, LGLV…KLTI, PEII…LRGT, and PCGP…ASLF.

Belongs to the UPF0756 family.

The protein localises to the cell membrane. This is UPF0756 membrane protein PTH_1668 from Pelotomaculum thermopropionicum (strain DSM 13744 / JCM 10971 / SI).